The primary structure comprises 337 residues: UDP-3-O-acylglucosamine N-acyltransferase (337 aa).

The active-site Proton acceptor is the His-238.

It belongs to the transferase hexapeptide repeat family. LpxD subfamily. Homotrimer.

The catalysed reaction is a UDP-3-O-[(3R)-3-hydroxyacyl]-alpha-D-glucosamine + a (3R)-hydroxyacyl-[ACP] = a UDP-2-N,3-O-bis[(3R)-3-hydroxyacyl]-alpha-D-glucosamine + holo-[ACP] + H(+). It functions in the pathway bacterial outer membrane biogenesis; LPS lipid A biosynthesis. Functionally, catalyzes the N-acylation of UDP-3-O-acylglucosamine using 3-hydroxyacyl-ACP as the acyl donor. Is involved in the biosynthesis of lipid A, a phosphorylated glycolipid that anchors the lipopolysaccharide to the outer membrane of the cell. This is UDP-3-O-acylglucosamine N-acyltransferase from Xanthomonas euvesicatoria pv. vesicatoria (strain 85-10) (Xanthomonas campestris pv. vesicatoria).